The chain runs to 205 residues: ATP synthase subunit b (205 aa).

Residues 45–65 (LGMTATAWVSLAMVIVILLLL) form a helical membrane-spanning segment.

It belongs to the ATPase B chain family. F-type ATPases have 2 components, F(1) - the catalytic core - and F(0) - the membrane proton channel. F(1) has five subunits: alpha(3), beta(3), gamma(1), delta(1), epsilon(1). F(0) has three main subunits: a(1), b(2) and c(10-14). The alpha and beta chains form an alternating ring which encloses part of the gamma chain. F(1) is attached to F(0) by a central stalk formed by the gamma and epsilon chains, while a peripheral stalk is formed by the delta and b chains.

It localises to the cell inner membrane. Its function is as follows. F(1)F(0) ATP synthase produces ATP from ADP in the presence of a proton or sodium gradient. F-type ATPases consist of two structural domains, F(1) containing the extramembraneous catalytic core and F(0) containing the membrane proton channel, linked together by a central stalk and a peripheral stalk. During catalysis, ATP synthesis in the catalytic domain of F(1) is coupled via a rotary mechanism of the central stalk subunits to proton translocation. Functionally, component of the F(0) channel, it forms part of the peripheral stalk, linking F(1) to F(0). The chain is ATP synthase subunit b from Rhizorhabdus wittichii (strain DSM 6014 / CCUG 31198 / JCM 15750 / NBRC 105917 / EY 4224 / RW1) (Sphingomonas wittichii).